A 158-amino-acid chain; its full sequence is Transcriptional repressor NrdR (158 aa).

Positions 1-20 (MRCPSCGSLDTQVKDSRPTE) are disordered. A zinc finger lies at 3–34 (CPSCGSLDTQVKDSRPTEDSSVIRRRRVCLTC). The region spanning 49 to 139 (LTVIKRNGRR…VYRNFREAKD (91 aa)) is the ATP-cone domain.

Belongs to the NrdR family. Zn(2+) serves as cofactor.

Functionally, negatively regulates transcription of bacterial ribonucleotide reductase nrd genes and operons by binding to NrdR-boxes. The protein is Transcriptional repressor NrdR of Afipia carboxidovorans (strain ATCC 49405 / DSM 1227 / KCTC 32145 / OM5) (Oligotropha carboxidovorans).